A 703-amino-acid polypeptide reads, in one-letter code: Protein O-mannosyl-transferase TMEM260 (703 aa).

8 consecutive transmembrane segments (helical) span residues 20 to 40, 68 to 88, 90 to 110, 137 to 157, 182 to 202, 218 to 238, 314 to 334, and 352 to 372; these read GALRGSVAVFASVAAVFTLTL, PLFTLLASLTITLFPFGSVAY, VNLLCGLFGAVAASLLFYTVF, IAAEVFSLNNLFVGLLMALTV, SLCNQHTIVLYILCIIPWILF, LTLAFSAGLLPYVYLPVSSYL, KSSVVWLFTGMLCLYSLFFAW, and FWLQSNAVVAVLAGLGLATLV. Asn403 and Asn564 each carry an N-linked (GlcNAc...) asparagine glycan.

Belongs to the glycosyltransferase 117 (GT117) family.

The protein localises to the endoplasmic reticulum membrane. It carries out the reaction a di-trans,poly-cis-dolichyl beta-D-mannosyl phosphate + L-seryl-[protein] = 3-O-(alpha-D-mannosyl)-L-seryl-[protein] + a di-trans,poly-cis-dolichyl phosphate + H(+). It catalyses the reaction a di-trans,poly-cis-dolichyl beta-D-mannosyl phosphate + L-threonyl-[protein] = 3-O-(alpha-D-mannosyl)-L-threonyl-[protein] + a di-trans,poly-cis-dolichyl phosphate + H(+). Its function is as follows. O-mannosyl-transferase that transfers mannosyl residues to the hydroxyl group of serine or threonine residues of proteins. Specifically glycosylates the IPT/TIG domain of target proteins, such as MET and MST1R/RON. TMEM260-mediated O-mannosylated residues are composed of single mannose glycans that are not elongated or modified. This is Protein O-mannosyl-transferase TMEM260 from Mus musculus (Mouse).